We begin with the raw amino-acid sequence, 204 residues long: CASP-like protein 1U3 (204 aa).

The Cytoplasmic segment spans residues 1-19 (MCEGEKKKDSSSGALYCVN). Residues 20–40 (LALRIVVLGLAVAAAALMATA) form a helical membrane-spanning segment. Residues 41–63 (SQCTIFLYYGGPLHTITYKDFGP) lie on the Extracellular side of the membrane. Residues 64–84 (FVYLVVASSIGAFMEAIAIFL) traverse the membrane as a helical segment. Over 85–97 (TICKKKDGTPAKV) the chain is Cytoplasmic. A helical membrane pass occupies residues 98-118 (LLPLLDAAVPVLLYSATAAAF). Residues 119-146 (AAGDMSYCAVGKRVGVCTTAAAGNFCNQ) lie on the Extracellular side of the membrane. Residues 147-167 (VHIAMYVSLAAGVALLVAEIV) form a helical membrane-spanning segment. Over 168 to 204 (KHWPDSGKKKEGGGGGCGSDSDSDKSTPCHHGCHSKH) the chain is Cytoplasmic. Residues 173 to 204 (SGKKKEGGGGGCGSDSDSDKSTPCHHGCHSKH) form a disordered region.

It belongs to the Casparian strip membrane proteins (CASP) family. Homodimer and heterodimers.

It is found in the cell membrane. In Oryza sativa subsp. japonica (Rice), this protein is CASP-like protein 1U3.